The chain runs to 226 residues: Ribonuclease HII (226 aa).

One can recognise an RNase H type-2 domain in the interval 29–220; the sequence is GPVAGVDEAG…VVAAGVRLEQ (192 aa). A divalent metal cation-binding residues include Asp35, Glu36, and Asp129.

The protein belongs to the RNase HII family. The cofactor is Mn(2+). It depends on Mg(2+) as a cofactor.

The protein resides in the cytoplasm. It carries out the reaction Endonucleolytic cleavage to 5'-phosphomonoester.. Endonuclease that specifically degrades the RNA of RNA-DNA hybrids. The polypeptide is Ribonuclease HII (Rhodococcus erythropolis (strain PR4 / NBRC 100887)).